A 257-amino-acid chain; its full sequence is Transmembrane protein C257L (257 aa).

2 consecutive transmembrane segments (helical) span residues leucine 123–leucine 143 and methionine 163–valine 183.

This sequence belongs to the asfivirus C257R family.

The protein resides in the host membrane. It localises to the virion. The sequence is that of Transmembrane protein C257L from African swine fever virus (isolate Tick/South Africa/Pretoriuskop Pr4/1996) (ASFV).